A 223-amino-acid chain; its full sequence is Killer cell lectin-like receptor subfamily B member 1A (223 aa).

Residues methionine 1–lysine 43 are Cytoplasmic-facing. The short motif at cysteine 32–proline 35 is the LCK-binding motif element. Residues leucine 44–valine 63 form a helical; Signal-anchor for type II membrane protein membrane-spanning segment. Over arginine 64–serine 223 the chain is Extracellular. One can recognise a C-type lectin domain in the interval lysine 93–lysine 212. Disulfide bonds link cysteine 94/cysteine 105, cysteine 122/cysteine 210, and cysteine 189/cysteine 202.

As to quaternary structure, homodimer; disulfide-linked. Interacts with tyrosine kinase LCK. As to expression, expressed in natural killer cells.

It is found in the membrane. Functionally, plays a stimulatory role on natural killer (NK) cell cytotoxicity. In Rattus norvegicus (Rat), this protein is Killer cell lectin-like receptor subfamily B member 1A (Klrb1a).